The primary structure comprises 160 residues: Ribosomal RNA large subunit methyltransferase H (160 aa).

S-adenosyl-L-methionine-binding positions include Leu-76, Gly-108, and 127-132 (LGKMTW).

It belongs to the RNA methyltransferase RlmH family. Homodimer.

It is found in the cytoplasm. The catalysed reaction is pseudouridine(1915) in 23S rRNA + S-adenosyl-L-methionine = N(3)-methylpseudouridine(1915) in 23S rRNA + S-adenosyl-L-homocysteine + H(+). Functionally, specifically methylates the pseudouridine at position 1915 (m3Psi1915) in 23S rRNA. This Sinorhizobium medicae (strain WSM419) (Ensifer medicae) protein is Ribosomal RNA large subunit methyltransferase H.